Reading from the N-terminus, the 203-residue chain is uncharacterized protein (203 aa).

This is an uncharacterized protein from Archaeoglobus fulgidus (strain ATCC 49558 / DSM 4304 / JCM 9628 / NBRC 100126 / VC-16).